A 199-amino-acid chain; its full sequence is MARTWLLLFLGLRCQALPSGIAGTPFPSLAPPVTLLVDGRRHTLVVCLVLDAAPPGLDSLVWFSGGNGSALDAFTYGPSPAPDGTWTSLGQLSLSSEELEAWEPLVCHTRPAAGGLNRSTHPLQLSGEEASTDRTCPQETLRGTQRQVLRLSVLRLLLFKLLLLDVFLTCSRLCVLAGQHLLPPPSSKQAPASTHQSWT.

The first 16 residues, 1-16 (MARTWLLLFLGLRCQA), serve as a signal peptide directing secretion. Topologically, residues 17-155 (LPSGIAGTPF…RQVLRLSVLR (139 aa)) are extracellular. The cysteines at positions 47 and 107 are disulfide-linked. 2 N-linked (GlcNAc...) asparagine glycosylation sites follow: asparagine 67 and asparagine 117. The tract at residues 117–139 (NRSTHPLQLSGEEASTDRTCPQE) is disordered. The chain crosses the membrane as a helical span at residues 156-176 (LLLFKLLLLDVFLTCSRLCVL). At 177–199 (AGQHLLPPPSSKQAPASTHQSWT) the chain is on the cytoplasmic side.

In terms of assembly, heterodimer with TCRB; disulfide linked. This heterodimer assembles with CD3 proteins into a signaling-competent pre-T-cell receptor complex. Interacts with RHBDD1. Found in CD45+ but not in the CD45- fetal liver cells.

It localises to the membrane. It is found in the cell membrane. Its function is as follows. Component of the pre-T-cell receptor complex (composed of PTCRA, TCRB and the CD3 complex) that has a crucial role in early T-cell development, particularly alpha-beta T cell differentiation. The protein is Pre T-cell antigen receptor alpha of Rattus norvegicus (Rat).